Reading from the N-terminus, the 134-residue chain is Small ribosomal subunit protein bS6 (134 aa).

The segment covering 113-122 has biased composition (basic and acidic residues); that stretch reads NKDIKEKEQP. The segment at 113-134 is disordered; it reads NKDIKEKEQPSESNVDADLKVN.

It belongs to the bacterial ribosomal protein bS6 family.

Functionally, binds together with bS18 to 16S ribosomal RNA. The protein is Small ribosomal subunit protein bS6 of Borrelia recurrentis (strain A1).